Reading from the N-terminus, the 424-residue chain is Glutamate-1-semialdehyde 2,1-aminomutase (424 aa).

Position 265 is an N6-(pyridoxal phosphate)lysine (K265).

It belongs to the class-III pyridoxal-phosphate-dependent aminotransferase family. HemL subfamily. Homodimer. It depends on pyridoxal 5'-phosphate as a cofactor.

Its subcellular location is the cytoplasm. It catalyses the reaction (S)-4-amino-5-oxopentanoate = 5-aminolevulinate. It participates in porphyrin-containing compound metabolism; protoporphyrin-IX biosynthesis; 5-aminolevulinate from L-glutamyl-tRNA(Glu): step 2/2. This chain is Glutamate-1-semialdehyde 2,1-aminomutase, found in Alkaliphilus oremlandii (strain OhILAs) (Clostridium oremlandii (strain OhILAs)).